Reading from the N-terminus, the 436-residue chain is 3-ketoacyl-CoA thiolase (436 aa).

The active-site Acyl-thioester intermediate is the cysteine 99. Catalysis depends on proton acceptor residues histidine 392 and cysteine 422.

It belongs to the thiolase-like superfamily. Thiolase family. In terms of assembly, heterotetramer of two alpha chains (FadJ) and two beta chains (FadI).

It localises to the cytoplasm. The catalysed reaction is an acyl-CoA + acetyl-CoA = a 3-oxoacyl-CoA + CoA. It participates in lipid metabolism; fatty acid beta-oxidation. Catalyzes the final step of fatty acid oxidation in which acetyl-CoA is released and the CoA ester of a fatty acid two carbons shorter is formed. The polypeptide is 3-ketoacyl-CoA thiolase (Escherichia coli O127:H6 (strain E2348/69 / EPEC)).